The following is a 219-amino-acid chain: Claudin-3 (219 aa).

The Cytoplasmic segment spans residues 1–8 (MSMGLEIT). The chain crosses the membrane as a helical span at residues 9–29 (GTSLAVLGWLCTIVCCALPMW). Residues 30–80 (RVSAFIGSSIITAQITWEGLWMNCVVQSTGQMQCKMYDSLLALPQDLQAAR) are Extracellular-facing. The chain crosses the membrane as a helical span at residues 81–101 (ALIVVSILLAAFGLLVALVGA). Over 102-115 (QCTNCVQDETAKAK) the chain is Cytoplasmic. A helical transmembrane segment spans residues 116–136 (ITIVAGVLFLLAALLTLVPVS). The Extracellular portion of the chain corresponds to 137-159 (WSANTIIRDFYNPLVPEAQKREM). The helical transmembrane segment at 160–180 (GAGLYVGWAAAALQLLGGALL) threads the bilayer. Residues 181–219 (CCSCPPRDKYAPTKILYSAPRSTGPGTGTGTAYDRKDYV) lie on the Cytoplasmic side of the membrane. Position 197 is a phosphotyrosine (Tyr-197). Ser-198 bears the Phosphoserine mark. An interactions with TJP1, TJP2 and TJP3 region spans residues 218 to 219 (YV).

The protein belongs to the claudin family. In terms of assembly, can form homo- and heteropolymers with other CLDN. Homopolymers interact with CLDN1 and CLDN2 homopolymers. Interacts in cis (within the same plasma membrane) with CLDN19. Directly interacts with TJP1/ZO-1, TJP2/ZO-2 and TJP3/ZO-3. (Microbial infection) Interacts with Clostridium perfringens enterotoxin CPE; the interaction may disrupt claudin assembly in tight junctions. As to expression, expressed in the lung. Expressed at high levels in the liver and at lower levels, in kidney and testis.

The protein localises to the cell junction. It localises to the tight junction. The protein resides in the cell membrane. Functionally, plays a major role in tight junction-specific obliteration of the intercellular space, through calcium-independent cell-adhesion activity. This Mus musculus (Mouse) protein is Claudin-3 (Cldn3).